A 367-amino-acid polypeptide reads, in one-letter code: uncharacterized protein (367 aa).

The protein localises to the mitochondrion. This is an uncharacterized protein from Paramecium tetraurelia.